Consider the following 76-residue polypeptide: ATP synthase subunit 9, mitochondrial (76 aa).

The next 2 membrane-spanning stretches (helical) occupy residues 10 to 30 and 52 to 72; these read IGAG…AIVF and ILGF…SFLL.

Belongs to the ATPase C chain family. As to quaternary structure, F-type ATPases have 2 components, CF(1) - the catalytic core - and CF(0) - the membrane proton channel. CF(1) has five subunits: alpha(3), beta(3), gamma(1), delta(1), epsilon(1). CF(0) has three main subunits: a, b and c.

Its subcellular location is the mitochondrion membrane. Mitochondrial membrane ATP synthase (F(1)F(0) ATP synthase or Complex V) produces ATP from ADP in the presence of a proton gradient across the membrane which is generated by electron transport complexes of the respiratory chain. F-type ATPases consist of two structural domains, F(1) - containing the extramembraneous catalytic core and F(0) - containing the membrane proton channel, linked together by a central stalk and a peripheral stalk. During catalysis, ATP synthesis in the catalytic domain of F(1) is coupled via a rotary mechanism of the central stalk subunits to proton translocation. Part of the complex F(0) domain. A homomeric c-ring of probably 10 subunits is part of the complex rotary element. The chain is ATP synthase subunit 9, mitochondrial (ATP9) from Kluyveromyces lactis (strain ATCC 8585 / CBS 2359 / DSM 70799 / NBRC 1267 / NRRL Y-1140 / WM37) (Yeast).